The primary structure comprises 137 residues: Peptide methionine sulfoxide reductase MsrB (137 aa).

The region spanning 7–129 (AEELKKNLSD…NSASLRFTDG (123 aa)) is the MsrB domain. 4 residues coordinate Zn(2+): C46, C49, C95, and C98. C118 functions as the Nucleophile in the catalytic mechanism.

Belongs to the MsrB Met sulfoxide reductase family. Zn(2+) is required as a cofactor.

The catalysed reaction is L-methionyl-[protein] + [thioredoxin]-disulfide + H2O = L-methionyl-(R)-S-oxide-[protein] + [thioredoxin]-dithiol. This chain is Peptide methionine sulfoxide reductase MsrB, found in Shigella dysenteriae serotype 1 (strain Sd197).